A 427-amino-acid chain; its full sequence is 3-phosphoshikimate 1-carboxyvinyltransferase (427 aa).

3-phosphoshikimate is bound by residues lysine 22, serine 23, and arginine 27. Residue lysine 22 participates in phosphoenolpyruvate binding. Residues glycine 96 and arginine 124 each coordinate phosphoenolpyruvate. Residues serine 170, serine 171, glutamine 172, serine 199, aspartate 313, asparagine 336, and lysine 340 each contribute to the 3-phosphoshikimate site. Glutamine 172 is a binding site for phosphoenolpyruvate. Residue aspartate 313 is the Proton acceptor of the active site. 3 residues coordinate phosphoenolpyruvate: arginine 344, arginine 386, and lysine 411.

This sequence belongs to the EPSP synthase family. As to quaternary structure, monomer.

The protein localises to the cytoplasm. It carries out the reaction 3-phosphoshikimate + phosphoenolpyruvate = 5-O-(1-carboxyvinyl)-3-phosphoshikimate + phosphate. The protein operates within metabolic intermediate biosynthesis; chorismate biosynthesis; chorismate from D-erythrose 4-phosphate and phosphoenolpyruvate: step 6/7. Catalyzes the transfer of the enolpyruvyl moiety of phosphoenolpyruvate (PEP) to the 5-hydroxyl of shikimate-3-phosphate (S3P) to produce enolpyruvyl shikimate-3-phosphate and inorganic phosphate. This Aeromonas salmonicida protein is 3-phosphoshikimate 1-carboxyvinyltransferase.